The chain runs to 239 residues: tRNA (guanine-N(7)-)-methyltransferase (239 aa).

Residues glutamate 69, glutamate 94, aspartate 121, and aspartate 144 each contribute to the S-adenosyl-L-methionine site. Residue aspartate 144 is part of the active site. A substrate-binding site is contributed by lysine 148. The interval 150-155 is interaction with RNA; that stretch reads RHNKRR. Substrate-binding positions include aspartate 180 and 217–220; that span reads TKFE.

Belongs to the class I-like SAM-binding methyltransferase superfamily. TrmB family. As to quaternary structure, monomer.

It carries out the reaction guanosine(46) in tRNA + S-adenosyl-L-methionine = N(7)-methylguanosine(46) in tRNA + S-adenosyl-L-homocysteine. It functions in the pathway tRNA modification; N(7)-methylguanine-tRNA biosynthesis. Catalyzes the formation of N(7)-methylguanine at position 46 (m7G46) in tRNA. This Klebsiella pneumoniae subsp. pneumoniae (strain ATCC 700721 / MGH 78578) protein is tRNA (guanine-N(7)-)-methyltransferase.